Here is a 251-residue protein sequence, read N- to C-terminus: DNA repair protein RecO (251 aa).

It belongs to the RecO family.

Functionally, involved in DNA repair and RecF pathway recombination. The chain is DNA repair protein RecO from Macrococcus caseolyticus (strain JCSC5402) (Macrococcoides caseolyticum).